A 225-amino-acid chain; its full sequence is Large ribosomal subunit protein uL4 (225 aa).

Residues 46–102 (KRQGTHATKGRGEVRGGGRKPFRQKGTGRARQGSIRAPHFTGGGTVHGPQPRDYSQR) form a disordered region. Positions 62 to 73 (GGRKPFRQKGTG) are enriched in basic residues.

It belongs to the universal ribosomal protein uL4 family. In terms of assembly, part of the 50S ribosomal subunit.

Functionally, one of the primary rRNA binding proteins, this protein initially binds near the 5'-end of the 23S rRNA. It is important during the early stages of 50S assembly. It makes multiple contacts with different domains of the 23S rRNA in the assembled 50S subunit and ribosome. In terms of biological role, forms part of the polypeptide exit tunnel. The protein is Large ribosomal subunit protein uL4 of Corynebacterium urealyticum (strain ATCC 43042 / DSM 7109).